A 217-amino-acid chain; its full sequence is THAP domain-containing protein 2 (217 aa).

The THAP-type zinc-finger motif lies at 1–80 (MPTNCAAAGC…LKMDAVPTIF (80 aa)). The short motif at 122–125 (EHSY) is the HCFC1-binding motif (HBM) element.

This is THAP domain-containing protein 2 (Thap2) from Mus musculus (Mouse).